The following is an 878-amino-acid chain: Serine/threonine-protein kinase D2 (878 aa).

The segment covering 1-12 (MATAPSYPAGLP) has biased composition (low complexity). The tract at residues 1 to 35 (MATAPSYPAGLPGSPGPGSPPPPGGLELQSPPPLL) is disordered. Positions 14–35 (SPGPGSPPPPGGLELQSPPPLL) are enriched in pro residues. A Phosphoserine modification is found at serine 30. At tyrosine 87 the chain carries Phosphotyrosine. The segment at 138-188 (PHALTVHSYRAPAFCDHCGEMLFGLVRQGLKCDGCGLNYHKRCAFSIPNNC) adopts a Phorbol-ester/DAG-type 1 zinc-finger fold. Phosphoserine occurs at positions 197, 198, 200, 203, 206, 212, and 214. A disordered region spans residues 224–247 (RSTTELLPRRPPSSSSSSSASSYT). The span at 236–245 (SSSSSSSASS) shows a compositional bias: low complexity. Residue serine 244 is modified to Phosphoserine; by CSNK1D and CSNK1E. A Phorbol-ester/DAG-type 2 zinc finger spans residues 264–314 (PHTFLIHSYTRPTVCQACKKLLKGLFRQGLQCKDCKFNCHKRCATRVPNDC). The segment at 343–373 (ESEDSGVIPGSHSENALHASEEEEGEGGKAQ) is disordered. One can recognise a PH domain in the interval 397–509 (TTLREGWVVH…WETAIRQALM (113 aa)). Tyrosine 407 carries the post-translational modification Phosphotyrosine. A Phosphotyrosine; by ABL1 modification is found at tyrosine 438. At serine 518 the chain carries Phosphoserine. In terms of domain architecture, Protein kinase spans 551–807 (IFPDEVLGSG…VDKSLSHPWL (257 aa)). Residues 557-565 (LGSGQFGVV) and lysine 580 contribute to the ATP site. Aspartate 674 acts as the Proton acceptor in catalysis. The residue at position 706 (serine 706) is a Phosphoserine; by PKC. Phosphoserine is present on serine 710. A Phosphotyrosine; by ABL1 modification is found at tyrosine 717. The short motif at 724–726 (LNQ) is the Important for ABL1-mediated Tyr-717 phosphorylation element. The tract at residues 844–869 (HPLPGSGLPTDRDLGGACPPQDHDMQ) is disordered. Serine 876 bears the Phosphoserine; by autocatalysis mark.

This sequence belongs to the protein kinase superfamily. CAMK Ser/Thr protein kinase family. PKD subfamily. As to quaternary structure, interacts (via C-terminus) with LCK. Interacts (via N-terminal AP-rich region) with CIB1 isoform 2. Interacts (via N-terminus and zing-finger domain 1 and 2) with PRKCD in response to oxidative stress; the interaction is independent of PRKD2 tyrosine phosphorylation. Requires Mg(2+) as cofactor. Phosphorylation of Ser-876 correlates with the activation status of the kinase. Ser-706 or/and Ser-710 are probably phosphorylated by PKC. Phosphorylation at Ser-244 by CSNK1D and CSNK1E promotes nuclear localization and substrate targeting. Phosphorylation at Ser-244, Ser-706 and Ser-710 is required for nuclear localization. Phosphorylated at Tyr-438 by ABL1 in response to oxidative stress. Phosphorylated at Tyr-717 by ABL1 specifically in response to oxidative stress; requires prior phosphorylation at Ser-706 or/and Ser-710. In terms of tissue distribution, widely expressed.

The protein resides in the cytoplasm. It localises to the cell membrane. The protein localises to the nucleus. Its subcellular location is the golgi apparatus. It is found in the trans-Golgi network. It catalyses the reaction L-seryl-[protein] + ATP = O-phospho-L-seryl-[protein] + ADP + H(+). The catalysed reaction is L-threonyl-[protein] + ATP = O-phospho-L-threonyl-[protein] + ADP + H(+). With respect to regulation, activated by DAG and phorbol esters. Phorbol-ester/DAG-type domains bind DAG, mediating translocation to membranes. Autophosphorylation of Ser-710 and phosphorylation of Ser-706 by PKC relieves auto-inhibition by the PH domain. Catalytic activity is further increased by phosphorylation at Tyr-717 in response to oxidative stress. Its function is as follows. Serine/threonine-protein kinase that converts transient diacylglycerol (DAG) signals into prolonged physiological effects downstream of PKC, and is involved in the regulation of cell proliferation via MAPK1/3 (ERK1/2) signaling, oxidative stress-induced NF-kappa-B activation, inhibition of HDAC7 transcriptional repression, signaling downstream of T-cell antigen receptor (TCR) and cytokine production, and plays a role in Golgi membrane trafficking, angiogenesis, secretory granule release and cell adhesion. May potentiate mitogenesis induced by the neuropeptide bombesin by mediating an increase in the duration of MAPK1/3 (ERK1/2) signaling, which leads to accumulation of immediate-early gene products including FOS that stimulate cell cycle progression. In response to oxidative stress, is phosphorylated at Tyr-438 and Tyr-717 by ABL1, which leads to the activation of PRKD2 without increasing its catalytic activity, and mediates activation of NF-kappa-B. In response to the activation of the gastrin receptor CCKBR, is phosphorylated at Ser-244 by CSNK1D and CSNK1E, translocates to the nucleus, phosphorylates HDAC7, leading to nuclear export of HDAC7 and inhibition of HDAC7 transcriptional repression of NR4A1/NUR77. Upon TCR stimulation, is activated independently of ZAP70, translocates from the cytoplasm to the nucleus and is required for interleukin-2 (IL2) promoter up-regulation. During adaptive immune responses, is required in peripheral T-lymphocytes for the production of the effector cytokines IL2 and IFNG after TCR engagement and for optimal induction of antibody responses to antigens. In epithelial cells stimulated with lysophosphatidic acid (LPA), is activated through a PKC-dependent pathway and mediates LPA-stimulated interleukin-8 (IL8) secretion via a NF-kappa-B-dependent pathway. During TCR-induced T-cell activation, interacts with and is activated by the tyrosine kinase LCK, which results in the activation of the NFAT transcription factors. In the trans-Golgi network (TGN), regulates the fission of transport vesicles that are on their way to the plasma membrane and in polarized cells is involved in the transport of proteins from the TGN to the basolateral membrane. Plays an important role in endothelial cell proliferation and migration prior to angiogenesis, partly through modulation of the expression of KDR/VEGFR2 and FGFR1, two key growth factor receptors involved in angiogenesis. In secretory pathway, is required for the release of chromogranin-A (CHGA)-containing secretory granules from the TGN. Downstream of PRKCA, plays important roles in angiotensin-2-induced monocyte adhesion to endothelial cells. Plays a regulatory role in angiogenesis and tumor growth by phosphorylating a downstream mediator CIB1 isoform 2, resulting in vascular endothelial growth factor A (VEGFA) secretion. This is Serine/threonine-protein kinase D2 (PRKD2) from Homo sapiens (Human).